We begin with the raw amino-acid sequence, 89 residues long: Bacterial microcompartment shell vertex protein GrpN (89 aa).

Residues 1–83 (MYLGKVIGTV…IDAAVVGIVD (83 aa)) enclose the BMV domain.

The protein belongs to the CcmL/EutN family. As to quaternary structure, homopentamer with a small central pore.

The protein localises to the bacterial microcompartment. Its function is as follows. Probably forms vertices in the bacterial microcompartment (BMC) predicted to be involved in glycyl radical-based 1,2-propanediol metabolism in this organism. In Rhodospirillum rubrum (strain F11), this protein is Bacterial microcompartment shell vertex protein GrpN.